A 245-amino-acid polypeptide reads, in one-letter code: 5-oxoprolinase subunit A (245 aa).

It belongs to the LamB/PxpA family. As to quaternary structure, forms a complex composed of PxpA, PxpB and PxpC.

The enzyme catalyses 5-oxo-L-proline + ATP + 2 H2O = L-glutamate + ADP + phosphate + H(+). Catalyzes the cleavage of 5-oxoproline to form L-glutamate coupled to the hydrolysis of ATP to ADP and inorganic phosphate. The protein is 5-oxoprolinase subunit A of Yersinia pseudotuberculosis serotype O:1b (strain IP 31758).